The primary structure comprises 331 residues: DNA-directed RNA polymerase subunit alpha (331 aa).

The interval M1–R237 is alpha N-terminal domain (alpha-NTD). Residues F251–N331 are alpha C-terminal domain (alpha-CTD).

It belongs to the RNA polymerase alpha chain family. Homodimer. The RNAP catalytic core consists of 2 alpha, 1 beta, 1 beta' and 1 omega subunit. When a sigma factor is associated with the core the holoenzyme is formed, which can initiate transcription.

It carries out the reaction RNA(n) + a ribonucleoside 5'-triphosphate = RNA(n+1) + diphosphate. Functionally, DNA-dependent RNA polymerase catalyzes the transcription of DNA into RNA using the four ribonucleoside triphosphates as substrates. In Buchnera aphidicola subsp. Baizongia pistaciae (strain Bp), this protein is DNA-directed RNA polymerase subunit alpha.